The chain runs to 131 residues: Fumarate reductase subunit C (131 aa).

A run of 3 helical transmembrane segments spans residues 30-50 (EGTC…VFAL), 58-78 (AGFV…VTLI), and 109-129 (IVRG…AVAL).

It belongs to the FrdC family. Part of an enzyme complex containing four subunits: a flavoprotein (FrdA), an iron-sulfur protein (FrdB), and two hydrophobic anchor proteins (FrdC and FrdD).

Its subcellular location is the cell inner membrane. Functionally, two distinct, membrane-bound, FAD-containing enzymes are responsible for the catalysis of fumarate and succinate interconversion; fumarate reductase is used in anaerobic growth, and succinate dehydrogenase is used in aerobic growth. Anchors the catalytic components of the fumarate reductase complex to the cell inner membrane, binds quinones. The chain is Fumarate reductase subunit C from Proteus vulgaris.